The chain runs to 795 residues: Lon protease (795 aa).

The Lon N-terminal domain occupies 7–213; it reads SQILVVRGQV…KIIQAGIEDL (207 aa). Residue 379–386 participates in ATP binding; it reads GPPGVGKS. The region spanning 615–795 is the Lon proteolytic domain; the sequence is VSLPGIVNGM…YSDIYNKLFS (181 aa). Residues S702 and K745 contribute to the active site.

Belongs to the peptidase S16 family. In terms of assembly, homohexamer. Organized in a ring with a central cavity.

It localises to the cytoplasm. The enzyme catalyses Hydrolysis of proteins in presence of ATP.. ATP-dependent serine protease that mediates the selective degradation of mutant and abnormal proteins as well as certain short-lived regulatory proteins. Required for cellular homeostasis and for survival from DNA damage and developmental changes induced by stress. Degrades polypeptides processively to yield small peptide fragments that are 5 to 10 amino acids long. Binds to DNA in a double-stranded, site-specific manner. This is Lon protease from Mycoplasma genitalium (strain ATCC 33530 / DSM 19775 / NCTC 10195 / G37) (Mycoplasmoides genitalium).